Consider the following 512-residue polypeptide: 2,3-bisphosphoglycerate-independent phosphoglycerate mutase (512 aa).

2 residues coordinate Mn(2+): Asp14 and Ser64. The active-site Phosphoserine intermediate is Ser64. Residues His125, 155 to 156 (RD), Arg187, Arg193, 259 to 262 (RADR), and Lys332 each bind substrate. 5 residues coordinate Mn(2+): Asp399, His403, Asp440, His441, and His459.

It belongs to the BPG-independent phosphoglycerate mutase family. In terms of assembly, monomer. It depends on Mn(2+) as a cofactor.

The enzyme catalyses (2R)-2-phosphoglycerate = (2R)-3-phosphoglycerate. The protein operates within carbohydrate degradation; glycolysis; pyruvate from D-glyceraldehyde 3-phosphate: step 3/5. Functionally, catalyzes the interconversion of 2-phosphoglycerate and 3-phosphoglycerate. This is 2,3-bisphosphoglycerate-independent phosphoglycerate mutase from Ruthia magnifica subsp. Calyptogena magnifica.